Reading from the N-terminus, the 336-residue chain is Cell division protein ZipA (336 aa).

At 1–2 (ME) the chain is on the periplasmic side. A helical membrane pass occupies residues 3 to 23 (LHILFFILAGLLIAVLIGFSL). Residues 24–336 (WSARREKSRI…SRQSYLARVS (313 aa)) lie on the Cytoplasmic side of the membrane. The segment at 57–76 (SLNPQSYAQTTGQHGETEAD) is disordered. A compositionally biased stretch (polar residues) spans 59-70 (NPQSYAQTTGQH).

This sequence belongs to the ZipA family. In terms of assembly, interacts with FtsZ via their C-terminal domains.

The protein localises to the cell inner membrane. Its function is as follows. Essential cell division protein that stabilizes the FtsZ protofilaments by cross-linking them and that serves as a cytoplasmic membrane anchor for the Z ring. Also required for the recruitment to the septal ring of downstream cell division proteins. The sequence is that of Cell division protein ZipA from Actinobacillus pleuropneumoniae serotype 7 (strain AP76).